Here is a 127-residue protein sequence, read N- to C-terminus: Ribosome-binding factor A (127 aa).

The protein belongs to the RbfA family. In terms of assembly, monomer. Binds 30S ribosomal subunits, but not 50S ribosomal subunits or 70S ribosomes.

It is found in the cytoplasm. Its function is as follows. One of several proteins that assist in the late maturation steps of the functional core of the 30S ribosomal subunit. Associates with free 30S ribosomal subunits (but not with 30S subunits that are part of 70S ribosomes or polysomes). Required for efficient processing of 16S rRNA. May interact with the 5'-terminal helix region of 16S rRNA. The polypeptide is Ribosome-binding factor A (Stenotrophomonas maltophilia (strain K279a)).